The sequence spans 626 residues: DNA (cytosine-5)-methyltransferase DRM2 (626 aa).

UBA domains follow at residues 59–101 and 109–150; these read GFSD…ISKY and SSKS…LLSC. Acidic residues predominate over residues 160–187; that stretch reads VEEEDGIDWSSSDDDTNYTDMLNSDDEK. 2 disordered regions span residues 160–196 and 245–282; these read VEEE…ENGS and TEHE…PNPM. The region spanning 190 to 232 is the UBA 3 domain; that stretch reads NSNENGSKIRSLVKMGFSELEASLAVERCGENVDIAELTDFLC. Residues 262 to 276 show a composition bias toward basic and acidic residues; that stretch reads ESKGEPRSSVDDEPI. In terms of domain architecture, SAM-dependent MTase DRM-type spans 295 to 626; sequence THRSLPELAR…EVVRARMRGS (332 aa).

Belongs to the class I-like SAM-binding methyltransferase superfamily. DRM-methyltransferase family. As to quaternary structure, interacts with RDM1. As to expression, expressed in roots, inflorescences and at lower levels in leaves.

The protein localises to the nucleus. It is found in the nucleoplasm. It catalyses the reaction a 2'-deoxycytidine in DNA + S-adenosyl-L-methionine = a 5-methyl-2'-deoxycytidine in DNA + S-adenosyl-L-homocysteine + H(+). Its function is as follows. Involved in de novo DNA methylation. Controls asymmetric and CpNpG methylation. Required for FWA gene silencing but not for the maintenance of SUP gene silencing. Functionally redundant to CMT3 to maintain non-CpG methylation. Involved in RNA-directed DNA methylation (RdDM). Acts as major DNA methyltransferase in the RdDM pathway, and is essential for RNA-directed de novo DNA methylation of cytosines in all sequence contexts. Associates with long non-coding RNA (lncRNA) produced by RNA polymerase V (Pol V). This association is dependent on AGO4 and IDN2, and results in DNA methylation of RdDM target loci. The polypeptide is DNA (cytosine-5)-methyltransferase DRM2 (DRM2) (Arabidopsis thaliana (Mouse-ear cress)).